The chain runs to 83 residues: Exodeoxyribonuclease 7 small subunit (83 aa).

This sequence belongs to the XseB family. Heterooligomer composed of large and small subunits.

The protein resides in the cytoplasm. The catalysed reaction is Exonucleolytic cleavage in either 5'- to 3'- or 3'- to 5'-direction to yield nucleoside 5'-phosphates.. Its function is as follows. Bidirectionally degrades single-stranded DNA into large acid-insoluble oligonucleotides, which are then degraded further into small acid-soluble oligonucleotides. The chain is Exodeoxyribonuclease 7 small subunit from Rhizobium rhizogenes (strain K84 / ATCC BAA-868) (Agrobacterium radiobacter).